A 342-amino-acid polypeptide reads, in one-letter code: Selenide, water dikinase (342 aa).

Cysteine 13 is an active-site residue. Residues lysine 16 and 44-46 contribute to the ATP site; that span reads SCD. Residue aspartate 47 participates in Mg(2+) binding. Residues aspartate 64, aspartate 87, and 134 to 136 contribute to the ATP site; that span reads GHS. Aspartate 87 contacts Mg(2+). Aspartate 222 is a Mg(2+) binding site.

This sequence belongs to the selenophosphate synthase 1 family. Class I subfamily. Homodimer. The cofactor is Mg(2+).

The catalysed reaction is hydrogenselenide + ATP + H2O = selenophosphate + AMP + phosphate + 2 H(+). Its function is as follows. Synthesizes selenophosphate from selenide and ATP. This is Selenide, water dikinase from Agathobacter rectalis (strain ATCC 33656 / DSM 3377 / JCM 17463 / KCTC 5835 / VPI 0990) (Eubacterium rectale).